The sequence spans 73 residues: Large ribosomal subunit protein bL31 (73 aa).

This sequence belongs to the bacterial ribosomal protein bL31 family. Type A subfamily. As to quaternary structure, part of the 50S ribosomal subunit.

Functionally, binds the 23S rRNA. In Ruegeria pomeroyi (strain ATCC 700808 / DSM 15171 / DSS-3) (Silicibacter pomeroyi), this protein is Large ribosomal subunit protein bL31 (rpmE).